A 212-amino-acid chain; its full sequence is Nascent polypeptide-associated complex subunit alpha-like protein 4 (212 aa).

Positions 25–35 (QKENDVVVEDV) are enriched in basic and acidic residues. The tract at residues 25 to 74 (QKENDVVVEDVKDGDEDDDDVDDDDDEIADGAGENEASKQSRSEKKSRKA) is disordered. Residues 36–53 (KDGDEDDDDVDDDDDEIA) show a composition bias toward acidic residues. Residues 65-130 (SRSEKKSRKA…AKIDDMSSQL (66 aa)) enclose the NAC-A/B domain. The UBA domain occupies 173 to 210 (VEAKDIDLVMTQAGVSRPKAVKALKESNGDIVSAIMEL).

It belongs to the NAC-alpha family.

Its function is as follows. May promote appropriate targeting of ribosome-nascent polypeptide complexes. The polypeptide is Nascent polypeptide-associated complex subunit alpha-like protein 4 (Arabidopsis thaliana (Mouse-ear cress)).